A 94-amino-acid chain; its full sequence is Exodeoxyribonuclease 7 small subunit (94 aa).

This sequence belongs to the XseB family. Heterooligomer composed of large and small subunits.

Its subcellular location is the cytoplasm. The enzyme catalyses Exonucleolytic cleavage in either 5'- to 3'- or 3'- to 5'-direction to yield nucleoside 5'-phosphates.. In terms of biological role, bidirectionally degrades single-stranded DNA into large acid-insoluble oligonucleotides, which are then degraded further into small acid-soluble oligonucleotides. This is Exodeoxyribonuclease 7 small subunit from Ralstonia nicotianae (strain ATCC BAA-1114 / GMI1000) (Ralstonia solanacearum).